A 629-amino-acid polypeptide reads, in one-letter code: Mitochondrial Rho GTPase 1 (629 aa).

Topologically, residues Met-1–Arg-600 are cytoplasmic. Residues Ser-2–His-170 enclose the Miro 1 domain. GTP contacts are provided by residues Gly-11 to Ser-18, Asp-59 to Arg-63, and Asn-115 to Asp-118. 2 EF-hand domains span residues Ala-186–Lys-221 and Ala-306–Leu-341. Asp-199, Asp-201, Asp-203, Tyr-205, Glu-210, Asp-319, Asp-321, Asp-323, and Glu-330 together coordinate Ca(2+). Positions Arg-421–Asn-585 constitute a Miro 2 domain. Residues Gly-430–Ser-437, Glu-466–Gly-470, and Leu-535–Asp-538 contribute to the GTP site. Residues Ala-601–Trp-621 form a helical; Anchor for type IV membrane protein membrane-spanning segment. The Mitochondrial intermembrane portion of the chain corresponds to Arg-622–Ala-629.

The protein belongs to the mitochondrial Rho GTPase family.

The protein localises to the mitochondrion outer membrane. Its function is as follows. Mitochondrial GTPase involved in mitochondrial trafficking. Probably involved in control of anterograde transport of mitochondria and their subcellular distribution. This Neurospora crassa (strain ATCC 24698 / 74-OR23-1A / CBS 708.71 / DSM 1257 / FGSC 987) protein is Mitochondrial Rho GTPase 1 (gem-1).